We begin with the raw amino-acid sequence, 337 residues long: Anthranilate phosphoribosyltransferase (337 aa).

5-phospho-alpha-D-ribose 1-diphosphate-binding positions include G80, 83-84 (GD), T88, 90-93 (NIST), 108-116 (KHGNRAVSS), and S120. G80 serves as a coordination point for anthranilate. Mg(2+) is bound at residue S92. Position 111 (N111) interacts with anthranilate. R166 serves as a coordination point for anthranilate. Residues D224 and E225 each contribute to the Mg(2+) site.

This sequence belongs to the anthranilate phosphoribosyltransferase family. In terms of assembly, homodimer. Mg(2+) serves as cofactor.

It carries out the reaction N-(5-phospho-beta-D-ribosyl)anthranilate + diphosphate = 5-phospho-alpha-D-ribose 1-diphosphate + anthranilate. Its pathway is amino-acid biosynthesis; L-tryptophan biosynthesis; L-tryptophan from chorismate: step 2/5. In terms of biological role, catalyzes the transfer of the phosphoribosyl group of 5-phosphorylribose-1-pyrophosphate (PRPP) to anthranilate to yield N-(5'-phosphoribosyl)-anthranilate (PRA). This Anaeromyxobacter sp. (strain K) protein is Anthranilate phosphoribosyltransferase.